We begin with the raw amino-acid sequence, 291 residues long: 2-dehydro-3-deoxyphosphooctonate aldolase 2 (291 aa).

Residue Ala2 is modified to N-acetylalanine.

The protein belongs to the KdsA family. In terms of tissue distribution, expressed in roots, apical meristem, emerging leaves, hydathodes of young leaves, styles of mature flowers and funicules of mature siliques.

It localises to the cytoplasm. The enzyme catalyses D-arabinose 5-phosphate + phosphoenolpyruvate + H2O = 3-deoxy-alpha-D-manno-2-octulosonate-8-phosphate + phosphate. Its function is as follows. Catalyzes the stereospecific condensation of D-arabinose 5-phosphate and phosphoenolpyruvate to form 3-deoxy-D-manno-octulosonate 8-phosphate (KDO-8-phosphate) and inorganic phosphate. Involved in the biosynthesis of 3-deoxy-D-manno-octulosonate (KDO) which is an indispensable component of rhamnogalacturonan II (RG-II), a structurally complex pectic polysaccharide of the primary cell wall. RG-II is essential for the cell wall integrity of rapidly growing tissues and pollen tube growth and elongation. In Arabidopsis thaliana (Mouse-ear cress), this protein is 2-dehydro-3-deoxyphosphooctonate aldolase 2 (KDSA2).